We begin with the raw amino-acid sequence, 736 residues long: Phosphoribosylformylglycinamidine synthase subunit PurL (736 aa).

The active site involves histidine 50. 2 residues coordinate ATP: tyrosine 53 and lysine 92. A Mg(2+)-binding site is contributed by glutamate 94. Residues 95-98 (SHNH) and arginine 117 each bind substrate. Histidine 96 serves as the catalytic Proton acceptor. Aspartate 118 provides a ligand contact to Mg(2+). Glutamine 241 provides a ligand contact to substrate. Mg(2+) is bound at residue aspartate 269. 313–315 (ESQ) is a binding site for substrate. ATP contacts are provided by aspartate 495 and glycine 532. Asparagine 533 lines the Mg(2+) pocket. Position 535 (serine 535) interacts with substrate.

It belongs to the FGAMS family. Monomer. Part of the FGAM synthase complex composed of 1 PurL, 1 PurQ and 2 PurS subunits.

The protein resides in the cytoplasm. It carries out the reaction N(2)-formyl-N(1)-(5-phospho-beta-D-ribosyl)glycinamide + L-glutamine + ATP + H2O = 2-formamido-N(1)-(5-O-phospho-beta-D-ribosyl)acetamidine + L-glutamate + ADP + phosphate + H(+). It functions in the pathway purine metabolism; IMP biosynthesis via de novo pathway; 5-amino-1-(5-phospho-D-ribosyl)imidazole from N(2)-formyl-N(1)-(5-phospho-D-ribosyl)glycinamide: step 1/2. Its function is as follows. Part of the phosphoribosylformylglycinamidine synthase complex involved in the purines biosynthetic pathway. Catalyzes the ATP-dependent conversion of formylglycinamide ribonucleotide (FGAR) and glutamine to yield formylglycinamidine ribonucleotide (FGAM) and glutamate. The FGAM synthase complex is composed of three subunits. PurQ produces an ammonia molecule by converting glutamine to glutamate. PurL transfers the ammonia molecule to FGAR to form FGAM in an ATP-dependent manner. PurS interacts with PurQ and PurL and is thought to assist in the transfer of the ammonia molecule from PurQ to PurL. In Bartonella tribocorum (strain CIP 105476 / IBS 506), this protein is Phosphoribosylformylglycinamidine synthase subunit PurL.